A 448-amino-acid polypeptide reads, in one-letter code: MKKYRIIVFGCQMNEHDSEVLAGILESMGYCQAGNSEDPDIILINTCCVRKTAENKVFSLLGRLRRQKAQNPNLIIGVCGCMPQQEGMAERIKQLFPHVDLIFGTHNVHQLPELIGKVIEGQKQVLEIWPGYGGELREELPVKRKEGVRAWVTIMYGCNNFCTYCIVPYVRGREKSRSPEAVYEEVARLAGEGFKEVILLGQNVNSYGKDLGVKTDFASLLESLENIDGIDRIRYMTSHPRDFSLRLVEAIAASKKVCEHFHLPVQAGSNRILKKMNRGYTREEYVDLIRYIKSLIPHATVTTDIMVGFPGETDEDFNDTLDLVREIRFDSAYTFVYNIRPGTPAAEMPDQVAENVKKERIQALIKLQNKISLERNEEEVGQTQEVLVEGEKDRGSGFIYGRNRGNKTVIFSGDPSLVGKVVPVTVTGARLAHLTGILSYNYHQEGSR.

Positions 2 to 120 constitute an MTTase N-terminal domain; it reads KKYRIIVFGC…LPELIGKVIE (119 aa). Positions 11, 47, 81, 158, 162, and 165 each coordinate [4Fe-4S] cluster. The Radical SAM core domain occupies 144–374; sequence RKEGVRAWVT…IKLQNKISLE (231 aa). A TRAM domain is found at 377 to 440; sequence EEEVGQTQEV…LAHLTGILSY (64 aa).

This sequence belongs to the methylthiotransferase family. MiaB subfamily. As to quaternary structure, monomer. [4Fe-4S] cluster serves as cofactor.

It localises to the cytoplasm. The enzyme catalyses N(6)-dimethylallyladenosine(37) in tRNA + (sulfur carrier)-SH + AH2 + 2 S-adenosyl-L-methionine = 2-methylsulfanyl-N(6)-dimethylallyladenosine(37) in tRNA + (sulfur carrier)-H + 5'-deoxyadenosine + L-methionine + A + S-adenosyl-L-homocysteine + 2 H(+). Catalyzes the methylthiolation of N6-(dimethylallyl)adenosine (i(6)A), leading to the formation of 2-methylthio-N6-(dimethylallyl)adenosine (ms(2)i(6)A) at position 37 in tRNAs that read codons beginning with uridine. This Pelotomaculum thermopropionicum (strain DSM 13744 / JCM 10971 / SI) protein is tRNA-2-methylthio-N(6)-dimethylallyladenosine synthase.